The primary structure comprises 61 residues: Metallothionein-1C (61 aa).

A beta region spans residues 1–29; sequence MDPNCSCSTGSSCSCAGSCTCKACRCPSC. A divalent metal cation is bound by residues C5, C7, C13, C15, C19, C21, C24, C26, C29, C33, C34, C36, C37, C41, C44, C48, C50, C57, C59, and C60. Residues 30-61 form an alpha region; that stretch reads KKSCCSCCPVGCAKCAQGCICKGASDKCSCCA.

Belongs to the metallothionein superfamily. Type 1 family.

Metallothioneins have a high content of cysteine residues that bind various heavy metals; these proteins are transcriptionally regulated by both heavy metals and glucocorticoids. The chain is Metallothionein-1C (MT1C) from Ovis aries (Sheep).